The following is a 346-amino-acid chain: DNA-directed RNA polymerases I and III subunit RPAC1 (346 aa).

A2 bears the N-acetylalanine mark.

It belongs to the archaeal Rpo3/eukaryotic RPB3 RNA polymerase subunit family. In terms of assembly, component of the RNA polymerase I and RNA polymerase III complexes consisting of at least 13 and 17 subunits, respectively. Pol I complex consists of a ten-subunit catalytic core composed of POLR1A/RPA1, POLR1B/RPA2, POLR1C/RPAC1, POLR1D/RPAC2, POLR1H/RPA12, POLR2E/RPABC1, POLR2F/RPABC2, POLR2H/RPABC3, POLR2K/RPABC4 and POLR2L/RPABC5; a mobile stalk subunit POLR1F/RPA43 protruding from the core and additional subunits homologous to general transcription factors POLR1E/RPA49 and POLR1G/RPA34. Part of Pol I pre-initiation complex (PIC), in which Pol I core assembles with RRN3 and promoter-bound UTBF and SL1/TIF-IB complex. Pol III complex consists of a ten-subunit catalytic core composed of POLR3A/RPC1, POLR3B/RPC2, POLR1C/RPAC1, POLR1D/RPAC2, POLR3K/RPC10, POLR2E/RPABC1, POLR2F/RPABC2, POLR2H/RPABC3, POLR2K/RPABC4 and POLR2L/RPABC5; a mobile stalk composed of two subunits POLR3H/RPC8 and CRCP/RPC9, protruding from the core and functioning primarily in transcription initiation; and additional subunits homologous to general transcription factors of the RNA polymerase II machinery, POLR3C/RPC3-POLR3F/RPC6-POLR3G/RPC7 heterotrimer required for transcription initiation and POLR3D/RPC4-POLR3E/RPC5 heterodimer involved in both transcription initiation and termination.

It localises to the nucleus. The protein localises to the cytoplasm. The protein resides in the cytosol. Its function is as follows. DNA-dependent RNA polymerase catalyzes the transcription of DNA into RNA using the four ribonucleoside triphosphates as substrates. Common component of RNA polymerases I and III which synthesize ribosomal RNA precursors and short non-coding RNAs including 5S rRNA, snRNAs, tRNAs and miRNAs, respectively. POLR1C/RPAC1 is part of the polymerase core and may function as a clamp element that moves to open and close the cleft. The polypeptide is DNA-directed RNA polymerases I and III subunit RPAC1 (POLR1C) (Bos taurus (Bovine)).